Reading from the N-terminus, the 81-residue chain is Large ribosomal subunit protein bL31 (81 aa).

Residues C16, C18, C38, and C41 each contribute to the Zn(2+) site.

It belongs to the bacterial ribosomal protein bL31 family. Type A subfamily. In terms of assembly, part of the 50S ribosomal subunit. The cofactor is Zn(2+).

Functionally, binds the 23S rRNA. The chain is Large ribosomal subunit protein bL31 from Mycobacterium marinum (strain ATCC BAA-535 / M).